A 1264-amino-acid chain; its full sequence is Ubiquitin carboxyl-terminal hydrolase usp-48 (1264 aa).

Residues 108–430 (AGLINGGNFC…ACYGLLYRRR (323 aa)) enclose the USP domain. Cysteine 117 serves as the catalytic Nucleophile. Histidine 366 serves as the catalytic Proton acceptor. 3 disordered regions span residues 390–415 (IPKP…KEKY), 522–610 (AKGE…IMDT), and 630–679 (TVEV…PVSS). Basic and acidic residues-rich tracts occupy residues 403-415 (KTEK…KEKY) and 532-543 (EASENEEKKKNE). Residues 516–547 (AQEYEVAKGEKKKKKKEASENEEKKKNEEDEA) adopt a coiled-coil conformation. A compositionally biased stretch (low complexity) spans 565 to 575 (SEPSTSAAATE). Polar residues-rich tracts occupy residues 587 to 599 (ETPN…STQV) and 663 to 678 (NGTN…QPVS).

Belongs to the peptidase C19 family. Broadly expressed. Expressed in germline.

The protein resides in the nucleus. It is found in the chromosome. It catalyses the reaction Thiol-dependent hydrolysis of ester, thioester, amide, peptide and isopeptide bonds formed by the C-terminal Gly of ubiquitin (a 76-residue protein attached to proteins as an intracellular targeting signal).. Functionally, recognizes and hydrolyzes the peptide bond at the C-terminal Gly of ubiquitin. Involved in the processing of poly-ubiquitin precursors as well as that of ubiquitinated proteins. Required post-developmentally to restrict the plasticity of epidermal cells, probably by regulating gene expression. The sequence is that of Ubiquitin carboxyl-terminal hydrolase usp-48 from Caenorhabditis elegans.